Reading from the N-terminus, the 552-residue chain is Protein FAM234A (552 aa).

A compositionally biased stretch (basic and acidic residues) spans 1–22; sequence MLDHKDLEAEIHPLKNEERKSQ. A disordered region spans residues 1 to 40; the sequence is MLDHKDLEAEIHPLKNEERKSQENLGNPSKNEDNVKSAPP. At 1 to 49 the chain is on the cytoplasmic side; it reads MLDHKDLEAEIHPLKNEERKSQENLGNPSKNEDNVKSAPPQSRLSRCRA. The residue at position 21 (Ser-21) is a Phosphoserine. Residues 50 to 70 form a helical; Signal-anchor for type II membrane protein membrane-spanning segment; the sequence is AAFFLSLFLCLFVVFVVSFVI. The Extracellular segment spans residues 71-552; the sequence is PCPDRPASQR…FSRLRYQSEA (482 aa). Asn-116, Asn-314, Asn-389, and Asn-473 each carry an N-linked (GlcNAc...) asparagine glycan.

The protein belongs to the FAM234 family.

The protein resides in the membrane. The protein is Protein FAM234A of Homo sapiens (Human).